The following is a 326-amino-acid chain: GTPase Obg (326 aa).

Residues 1-159 form the Obg domain; that stretch reads MKFVDSAKIY…LEIELELKLM (159 aa). The tract at residues 119–138 is disordered; sequence EGGKGGKGNPHFASSTRQAP. Positions 160–323 constitute an OBG-type G domain; sequence ADVGLVGFPN…LKDELWSRVK (164 aa). GTP-binding positions include 166 to 173, 191 to 195, 213 to 216, 280 to 283, and 304 to 306; these read GFPNAGKS, FTTLV, DIPG, TKMD, and SSV. Mg(2+)-binding residues include S173 and T193.

The protein belongs to the TRAFAC class OBG-HflX-like GTPase superfamily. OBG GTPase family. Monomer. The cofactor is Mg(2+).

It localises to the cytoplasm. Its function is as follows. An essential GTPase which binds GTP, GDP and possibly (p)ppGpp with moderate affinity, with high nucleotide exchange rates and a fairly low GTP hydrolysis rate. Plays a role in control of the cell cycle, stress response, ribosome biogenesis and in those bacteria that undergo differentiation, in morphogenesis control. This chain is GTPase Obg, found in Chlorobium phaeobacteroides (strain BS1).